The following is a 358-amino-acid chain: 3-dehydroquinate synthase (358 aa).

NAD(+)-binding positions include 102–106 (GVVGD), 126–127 (TT), lysine 139, and lysine 148. 3 residues coordinate Zn(2+): glutamate 181, histidine 244, and histidine 260.

It belongs to the sugar phosphate cyclases superfamily. Dehydroquinate synthase family. Co(2+) is required as a cofactor. The cofactor is Zn(2+). NAD(+) serves as cofactor.

It is found in the cytoplasm. The enzyme catalyses 7-phospho-2-dehydro-3-deoxy-D-arabino-heptonate = 3-dehydroquinate + phosphate. The protein operates within metabolic intermediate biosynthesis; chorismate biosynthesis; chorismate from D-erythrose 4-phosphate and phosphoenolpyruvate: step 2/7. In terms of biological role, catalyzes the conversion of 3-deoxy-D-arabino-heptulosonate 7-phosphate (DAHP) to dehydroquinate (DHQ). The protein is 3-dehydroquinate synthase of Symbiobacterium thermophilum (strain DSM 24528 / JCM 14929 / IAM 14863 / T).